We begin with the raw amino-acid sequence, 422 residues long: 4-hydroxy-3-methylbut-2-en-1-yl diphosphate synthase (flavodoxin) (422 aa).

[4Fe-4S] cluster contacts are provided by Cys316, Cys319, Cys362, and Glu369.

This sequence belongs to the IspG family. [4Fe-4S] cluster serves as cofactor.

The enzyme catalyses (2E)-4-hydroxy-3-methylbut-2-enyl diphosphate + oxidized [flavodoxin] + H2O + 2 H(+) = 2-C-methyl-D-erythritol 2,4-cyclic diphosphate + reduced [flavodoxin]. It participates in isoprenoid biosynthesis; isopentenyl diphosphate biosynthesis via DXP pathway; isopentenyl diphosphate from 1-deoxy-D-xylulose 5-phosphate: step 5/6. In terms of biological role, converts 2C-methyl-D-erythritol 2,4-cyclodiphosphate (ME-2,4cPP) into 1-hydroxy-2-methyl-2-(E)-butenyl 4-diphosphate. The protein is 4-hydroxy-3-methylbut-2-en-1-yl diphosphate synthase (flavodoxin) of Ehrlichia ruminantium (strain Gardel).